The sequence spans 363 residues: Small ribosomal subunit biogenesis GTPase RsgA (363 aa).

The 157-residue stretch at 112-268 (HQQVIAANID…LIDTPGMREL (157 aa)) folds into the CP-type G domain. GTP contacts are provided by residues 157-160 (TKAD) and 210-218 (GSSGAGKST). Zn(2+) contacts are provided by Cys-291, Cys-296, His-298, and Cys-304. The interval 340–363 (RVAQNNRGKGSGKRPASVDRPGRR) is disordered.

This sequence belongs to the TRAFAC class YlqF/YawG GTPase family. RsgA subfamily. As to quaternary structure, monomer. Associates with 30S ribosomal subunit, binds 16S rRNA. It depends on Zn(2+) as a cofactor.

The protein localises to the cytoplasm. Its function is as follows. One of several proteins that assist in the late maturation steps of the functional core of the 30S ribosomal subunit. Helps release RbfA from mature subunits. May play a role in the assembly of ribosomal proteins into the subunit. Circularly permuted GTPase that catalyzes slow GTP hydrolysis, GTPase activity is stimulated by the 30S ribosomal subunit. The chain is Small ribosomal subunit biogenesis GTPase RsgA from Xanthomonas euvesicatoria pv. vesicatoria (strain 85-10) (Xanthomonas campestris pv. vesicatoria).